The primary structure comprises 977 residues: Serine/threonine-protein kinase N2 (977 aa).

3 consecutive REM-1 domains span residues 24-100 (NLDF…HIVV), 114-194 (DTPK…TSEI), and 200-280 (DVTT…ELPK). One can recognise a C2 domain in the interval 298–468 (PPNSPRQSIM…LYLEPQGTLF (171 aa)). 2 disordered regions span residues 342–381 (GRSKTASVSLPGWSPSEARSSFMSRGNKNKSGSSRTLSKS) and 531–576 (AADL…KRNS). Residues 358 to 378 (EARSSFMSRGNKNKSGSSRTL) are compositionally biased toward polar residues. The Protein kinase domain occupies 650–909 (FKCVAVLGRG…AEEVKRHPFF (260 aa)). Residues 656–664 (LGRGHFGKV) and lysine 679 contribute to the ATP site. Aspartate 775 acts as the Proton acceptor in catalysis. Positions 910–977 (RDMDWPGLLA…ADFDYIADWC (68 aa)) constitute an AGC-kinase C-terminal domain.

Belongs to the protein kinase superfamily. AGC Ser/Thr protein kinase family. PKC subfamily. Post-translationally, autophosphorylated. Phosphorylated. Proteolytically cleaved.

The protein localises to the cytoplasm. Its subcellular location is the nucleus. It is found in the membrane. The protein resides in the cell projection. It localises to the lamellipodium. The protein localises to the cytoskeleton. Its subcellular location is the cleavage furrow. It is found in the midbody. The protein resides in the cell junction. It catalyses the reaction L-seryl-[protein] + ATP = O-phospho-L-seryl-[protein] + ADP + H(+). It carries out the reaction L-threonyl-[protein] + ATP = O-phospho-L-threonyl-[protein] + ADP + H(+). Its activity is regulated as follows. Kinase activity is activated upon binding to GTP-bound Rho/Rac GTPases. Activated by lipids, particularly cardiolipin and to a lesser extent by other acidic phospholipids and unsaturated fatty acids. Two specific sites, Thr-809 (activation loop of the kinase domain) and Thr-951 (turn motif), may be needed to be phosphorylated for its full activation. In terms of biological role, pkc-related serine/threonine-protein kinase and Rho/Rac effector protein that participates in specific signal transduction responses in the cell. May play a role in the regulation of cell cycle progression, actin cytoskeleton assembly, cell migration, cell adhesion and transcription activation signaling processes. This chain is Serine/threonine-protein kinase N2 (pkn2), found in Danio rerio (Zebrafish).